The sequence spans 942 residues: Leucine--tRNA ligase 2 (942 aa).

The 'HIGH' region motif lies at 35–45 (PYPNSPFHLGH). The 'KMSKS' region signature appears at 619 to 623 (KMSKS). ATP is bound at residue Lys622.

This sequence belongs to the class-I aminoacyl-tRNA synthetase family.

It is found in the cytoplasm. It carries out the reaction tRNA(Leu) + L-leucine + ATP = L-leucyl-tRNA(Leu) + AMP + diphosphate. The polypeptide is Leucine--tRNA ligase 2 (Sulfolobus acidocaldarius (strain ATCC 33909 / DSM 639 / JCM 8929 / NBRC 15157 / NCIMB 11770)).